The primary structure comprises 54 residues: UPF0391 membrane protein Oant_1245 (54 aa).

The next 2 helical transmembrane spans lie at 5-25 (ALVFLVVALVAGALGFGGIAG) and 29-48 (GIAQILFFVFLALLVISLIA).

This sequence belongs to the UPF0391 family.

It is found in the cell membrane. This is UPF0391 membrane protein Oant_1245 from Brucella anthropi (strain ATCC 49188 / DSM 6882 / CCUG 24695 / JCM 21032 / LMG 3331 / NBRC 15819 / NCTC 12168 / Alc 37) (Ochrobactrum anthropi).